The following is a 268-amino-acid chain: Hydroxyethylthiazole kinase (268 aa).

Met45 serves as a coordination point for substrate. 2 residues coordinate ATP: Arg121 and Thr167. A substrate-binding site is contributed by Gly194.

The protein belongs to the Thz kinase family. It depends on Mg(2+) as a cofactor.

It catalyses the reaction 5-(2-hydroxyethyl)-4-methylthiazole + ATP = 4-methyl-5-(2-phosphooxyethyl)-thiazole + ADP + H(+). Its pathway is cofactor biosynthesis; thiamine diphosphate biosynthesis; 4-methyl-5-(2-phosphoethyl)-thiazole from 5-(2-hydroxyethyl)-4-methylthiazole: step 1/1. Catalyzes the phosphorylation of the hydroxyl group of 4-methyl-5-beta-hydroxyethylthiazole (THZ). This chain is Hydroxyethylthiazole kinase, found in Bacillus cereus (strain ZK / E33L).